The following is a 298-amino-acid chain: Putative ankyrin repeat-containing protein TP_0502 (298 aa).

ANK repeat units lie at residues 143–172 (CFEE…SAAL), 176–205 (RGTP…PVDQ), 210–239 (RAYS…DPNV), and 243–272 (NGQT…NPYL).

In Treponema pallidum (strain Nichols), this protein is Putative ankyrin repeat-containing protein TP_0502.